Consider the following 406-residue polypeptide: Cysteine desulfurase (406 aa).

Position 226 is an N6-(pyridoxal phosphate)lysine (Lys-226). Cys-364 serves as the catalytic Cysteine persulfide intermediate.

This sequence belongs to the class-V pyridoxal-phosphate-dependent aminotransferase family. Csd subfamily. Homodimer. Interacts with SufE and the SufBCD complex composed of SufB, SufC and SufD. The interaction with SufE is required to mediate the direct transfer of the sulfur atom from the S-sulfanylcysteine. The cofactor is pyridoxal 5'-phosphate.

It localises to the cytoplasm. The catalysed reaction is (sulfur carrier)-H + L-cysteine = (sulfur carrier)-SH + L-alanine. It catalyses the reaction L-selenocysteine + AH2 = hydrogenselenide + L-alanine + A + H(+). The protein operates within cofactor biosynthesis; iron-sulfur cluster biosynthesis. In terms of biological role, cysteine desulfurases mobilize the sulfur from L-cysteine to yield L-alanine, an essential step in sulfur metabolism for biosynthesis of a variety of sulfur-containing biomolecules. Component of the suf operon, which is activated and required under specific conditions such as oxidative stress and iron limitation. Acts as a potent selenocysteine lyase in vitro, that mobilizes selenium from L-selenocysteine. Selenocysteine lyase activity is however unsure in vivo. This is Cysteine desulfurase from Escherichia coli O8 (strain IAI1).